The primary structure comprises 100 residues: uncharacterized protein (100 aa).

The helical transmembrane segment at 13 to 32 (IWSSLNIICLMVTFLNVQLS) threads the bilayer.

The protein localises to the mitochondrion membrane. This is an uncharacterized protein from Schizosaccharomyces pombe (strain 972 / ATCC 24843) (Fission yeast).